A 102-amino-acid polypeptide reads, in one-letter code: Small ribosomal subunit protein uS10 (102 aa).

Belongs to the universal ribosomal protein uS10 family. Part of the 30S ribosomal subunit.

In terms of biological role, involved in the binding of tRNA to the ribosomes. In Methylorubrum populi (strain ATCC BAA-705 / NCIMB 13946 / BJ001) (Methylobacterium populi), this protein is Small ribosomal subunit protein uS10.